The primary structure comprises 313 residues: Ribosomal RNA small subunit methyltransferase H (313 aa).

S-adenosyl-L-methionine-binding positions include 35–37 (GGH), aspartate 55, phenylalanine 80, aspartate 102, and glutamine 109.

This sequence belongs to the methyltransferase superfamily. RsmH family.

Its subcellular location is the cytoplasm. The enzyme catalyses cytidine(1402) in 16S rRNA + S-adenosyl-L-methionine = N(4)-methylcytidine(1402) in 16S rRNA + S-adenosyl-L-homocysteine + H(+). Its function is as follows. Specifically methylates the N4 position of cytidine in position 1402 (C1402) of 16S rRNA. The chain is Ribosomal RNA small subunit methyltransferase H from Shewanella violacea (strain JCM 10179 / CIP 106290 / LMG 19151 / DSS12).